Here is a 119-residue protein sequence, read N- to C-terminus: Holo-[acyl-carrier-protein] synthase (119 aa).

Mg(2+) contacts are provided by Asp8 and Glu58.

It belongs to the P-Pant transferase superfamily. AcpS family. Mg(2+) is required as a cofactor.

It is found in the cytoplasm. It catalyses the reaction apo-[ACP] + CoA = holo-[ACP] + adenosine 3',5'-bisphosphate + H(+). Its function is as follows. Transfers the 4'-phosphopantetheine moiety from coenzyme A to a Ser of acyl-carrier-protein. This chain is Holo-[acyl-carrier-protein] synthase, found in Bacillus cereus (strain G9842).